Here is a 470-residue protein sequence, read N- to C-terminus: Adenosylhomocysteinase (470 aa).

Residues T61, D136, and E196 each coordinate substrate. Residue 197–199 (TTT) participates in NAD(+) binding. Substrate-binding residues include K226 and D230. NAD(+) contacts are provided by residues N231, 260-265 (GYGDVG), E283, N318, 339-341 (IGH), and N384.

The protein belongs to the adenosylhomocysteinase family. NAD(+) serves as cofactor.

Its subcellular location is the cytoplasm. It catalyses the reaction S-adenosyl-L-homocysteine + H2O = L-homocysteine + adenosine. It participates in amino-acid biosynthesis; L-homocysteine biosynthesis; L-homocysteine from S-adenosyl-L-homocysteine: step 1/1. Its function is as follows. May play a key role in the regulation of the intracellular concentration of adenosylhomocysteine. The protein is Adenosylhomocysteinase of Aromatoleum aromaticum (strain DSM 19018 / LMG 30748 / EbN1) (Azoarcus sp. (strain EbN1)).